We begin with the raw amino-acid sequence, 185 residues long: Ribosome-recycling factor (185 aa).

Belongs to the RRF family.

It is found in the cytoplasm. Its function is as follows. Responsible for the release of ribosomes from messenger RNA at the termination of protein biosynthesis. May increase the efficiency of translation by recycling ribosomes from one round of translation to another. The sequence is that of Ribosome-recycling factor from Aliivibrio fischeri (strain ATCC 700601 / ES114) (Vibrio fischeri).